We begin with the raw amino-acid sequence, 855 residues long: DNA mismatch repair protein MutS (855 aa).

An ATP-binding site is contributed by 616-623 (GPNMGGKS).

The protein belongs to the DNA mismatch repair MutS family.

Functionally, this protein is involved in the repair of mismatches in DNA. It is possible that it carries out the mismatch recognition step. This protein has a weak ATPase activity. The protein is DNA mismatch repair protein MutS of Salmonella paratyphi A (strain ATCC 9150 / SARB42).